We begin with the raw amino-acid sequence, 251 residues long: Triosephosphate isomerase (251 aa).

9 to 11 (NWK) provides a ligand contact to substrate. H95 acts as the Electrophile in catalysis. E167 functions as the Proton acceptor in the catalytic mechanism. Substrate contacts are provided by residues G173, S213, and 234–235 (GG).

Belongs to the triosephosphate isomerase family. As to quaternary structure, homodimer.

The protein resides in the cytoplasm. It catalyses the reaction D-glyceraldehyde 3-phosphate = dihydroxyacetone phosphate. The protein operates within carbohydrate biosynthesis; gluconeogenesis. It participates in carbohydrate degradation; glycolysis; D-glyceraldehyde 3-phosphate from glycerone phosphate: step 1/1. Involved in the gluconeogenesis. Catalyzes stereospecifically the conversion of dihydroxyacetone phosphate (DHAP) to D-glyceraldehyde-3-phosphate (G3P). The protein is Triosephosphate isomerase of Pediococcus pentosaceus (strain ATCC 25745 / CCUG 21536 / LMG 10740 / 183-1w).